The following is a 74-amino-acid chain: Exodeoxyribonuclease 7 small subunit (74 aa).

Belongs to the XseB family. As to quaternary structure, heterooligomer composed of large and small subunits.

Its subcellular location is the cytoplasm. It carries out the reaction Exonucleolytic cleavage in either 5'- to 3'- or 3'- to 5'-direction to yield nucleoside 5'-phosphates.. Bidirectionally degrades single-stranded DNA into large acid-insoluble oligonucleotides, which are then degraded further into small acid-soluble oligonucleotides. The chain is Exodeoxyribonuclease 7 small subunit from Clostridium botulinum (strain Eklund 17B / Type B).